We begin with the raw amino-acid sequence, 1242 residues long: Membrane-associated phosphatidylinositol transfer protein 1 (1242 aa).

Phosphothreonine occurs at positions 59, 282, and 287. Residues 259 to 330 (CNTGSEGPEA…HGGGVSPQSL (72 aa)) form a disordered region. Residues 272–282 (GKPSTETQPGT) are compositionally biased toward polar residues. The segment covering 299–319 (ASPDASFGKQWSSSSRSSYSS) has biased composition (low complexity). Phosphoserine occurs at positions 300, 304, 319, 326, 329, 342, 345, 346, and 373. Phosphoserine; by CDK1 is present on Ser-382. A compositionally biased stretch (low complexity) spans 581 to 593 (AGTGSRGSSRRGS). A disordered region spans residues 581-678 (AGTGSRGSSR…PASSEAPDGP (98 aa)). Residues Ser-593, Ser-600, and Ser-621 each carry the phosphoserine modification. A compositionally biased stretch (polar residues) spans 643–656 (GSQNSLQVAPTVTS). A DDHD domain is found at 684 to 878 (LDFKVSGFFL…VAFILRQVIE (195 aa)). Position 894 is a phosphoserine (Ser-894). Residues 1207 to 1242 (RSRGPSQVDLEGPGTPPTTLARGKTRSISLKLDSEE) are disordered. Arg-1209 bears the Omega-N-methylarginine mark. The residue at position 1235 (Ser-1235) is a Phosphoserine.

The protein belongs to the PtdIns transfer protein family. PI transfer class IIA subfamily. Interacts with PIK4CA and VAPB. Interacts with PTK2B via its C-terminus. Interacts with RHOA. Has higher affinity for the inactive, GDP-bound form of RHOA. The CDK1-phosphorylated form interacts with PLK1. Post-translationally, phosphorylated on multiple sites by CDK1 at the onset of mitosis. Phosphorylation facilitates dissociation from the Golgi complex and is required for interaction with PLK1. Phosphorylated on threonine residues upon treatment with oleic acid. In terms of processing, phosphorylated on tyrosine residues by PTK2B.

The protein localises to the cytoplasm. The protein resides in the golgi apparatus. It localises to the golgi stack membrane. Its subcellular location is the endoplasmic reticulum membrane. It is found in the lipid droplet. The protein localises to the cleavage furrow. The protein resides in the midbody. It catalyses the reaction a 1,2-diacyl-sn-glycero-3-phospho-(1D-myo-inositol)(in) = a 1,2-diacyl-sn-glycero-3-phospho-(1D-myo-inositol)(out). Catalyzes the transfer of phosphatidylinositol (PI) between membranes. Binds PI, phosphatidylcholine (PC) and phosphatidic acid (PA) with the binding affinity order of PI &gt; PA &gt; PC. Regulates RHOA activity, and plays a role in cytoskeleton remodeling. Necessary for normal completion of cytokinesis. Plays a role in maintaining normal diacylglycerol levels in the Golgi apparatus. Necessary for maintaining the normal structure of the endoplasmic reticulum and the Golgi apparatus. Required for protein export from the endoplasmic reticulum and the Golgi. Binds calcium ions. The polypeptide is Membrane-associated phosphatidylinositol transfer protein 1 (Pitpnm1) (Rattus norvegicus (Rat)).